A 329-amino-acid polypeptide reads, in one-letter code: Quinone-oxidoreductase homolog, chloroplastic (329 aa).

It belongs to the zinc-containing alcohol dehydrogenase family. Quinone oxidoreductase subfamily. The transit peptide is not cleaved.

It is found in the plastid. The protein localises to the chloroplast inner membrane. The chain is Quinone-oxidoreductase homolog, chloroplastic (QOR) from Spinacia oleracea (Spinach).